Reading from the N-terminus, the 546-residue chain is MFS-type transporter GME11371 (546 aa).

A run of 7 helical transmembrane segments spans residues 39–59 (LTYLFLALILCMLLAVIDLTI), 77–96 (IGWYASVFFMTVASSQSSWG), 107–127 (MFLLAMGIFELGNVICGAAPT), 137–157 (ITGIGAAGVIAGCFTVAAFAV), 167–187 (GGLAATYGVGSSIGPIIGGVL), 195–215 (WCFYINLPIGGFAAIVLFLFF), and 240–260 (FPGFFCCIAAVTCLLLALLWG). The N-linked (GlcNAc...) asparagine glycan is linked to Asn267. 7 consecutive transmembrane segments (helical) span residues 270-290 (DVIGTLVGFFLFTALFAVVEW), 307-327 (VVLFGTIGGFFAGGAQFVLVY), 349-369 (LPYIIGSTITTIVAGTTISAT), 370-390 (GYFTPLIVGGGALWTVSAGLI), 402-422 (WIGYQALAGLAVGLCYQPPIL), 433-453 (VAATSAILLFFQTMGGAFMVS), and 509-529 (ISFAIIIALTGASTVAGIFMP).

It belongs to the major facilitator superfamily.

The protein localises to the cell membrane. Its pathway is secondary metabolite biosynthesis. Functionally, MFS-type transporter; part of the gene cluster that mediates the biosynthesis of dibenzodioxocinones such as pestalotiollide B, a novel class of inhibitors against cholesterol ester transfer protein (CEPT). essential for dibenzodioxocinones biosynthesis and may be involved in the secretion of the cluster products. This chain is MFS-type transporter GME11371, found in Pestalotiopsis microspora.